The chain runs to 400 residues: Casein kinase I homolog hhp2 (400 aa).

Residues 12 to 278 enclose the Protein kinase domain; the sequence is YRIGRKIGSG…YLRKLFRDLL (267 aa). ATP contacts are provided by residues 18–26 and lysine 41; that span reads IGSGSFGQI. The Proton acceptor role is filled by aspartate 131. A disordered region spans residues 330 to 352; that stretch reads PNYSSIPLPAERNPKTPQSFSTN.

This sequence belongs to the protein kinase superfamily. CK1 Ser/Thr protein kinase family. Casein kinase I subfamily.

Its subcellular location is the nucleus. It carries out the reaction L-seryl-[protein] + ATP = O-phospho-L-seryl-[protein] + ADP + H(+). The enzyme catalyses L-threonyl-[protein] + ATP = O-phospho-L-threonyl-[protein] + ADP + H(+). Involved in DNA repair. May regulate the activity of protein(s) involved in double strand break repair caused by gamma rays. This chain is Casein kinase I homolog hhp2 (hhp2), found in Schizosaccharomyces pombe (strain 972 / ATCC 24843) (Fission yeast).